Consider the following 592-residue polypeptide: ATP-dependent RNA helicase DBP3 (592 aa).

The segment at 1–146 (MGKRPIEDDA…AGSYTEHTEL (146 aa)) is disordered. Residues 19-31 (KKSKKEKSGKSKK) are compositionally biased toward basic residues. The span at 73–82 (EAKEASKAGK) shows a compositional bias: basic and acidic residues. The segment covering 97-108 (AARKAARKAEKK) has biased composition (basic residues). Residues 116–141 (TASSAPTEASSVPAQTLSSSNAGSYT) are compositionally biased toward polar residues. Positions 179-206 (VNFKYLPVTDESQRAPFAGFTAPTPIQA) match the Q motif motif. A Helicase ATP-binding domain is found at 209 to 382 (WPFLLSGRDM…STFMVSPVRI (174 aa)). 222–229 (AETGSGKT) is a binding site for ATP. A DEAD box motif is present at residues 330–333 (DEAD). The Helicase C-terminal domain maps to 413–562 (RLLQLLKQYQ…EVPEELLKFG (150 aa)).

This sequence belongs to the DEAD box helicase family. DDX5/DBP2 subfamily.

The protein resides in the nucleus. The protein localises to the nucleolus. The enzyme catalyses ATP + H2O = ADP + phosphate + H(+). In terms of biological role, ATP-dependent RNA helicase required for 60S ribosomal subunit synthesis. Involved in efficient pre-rRNA processing, predominantly at site A3, which is necessary for the normal formation of 25S and 5.8S rRNAs. This Phaeosphaeria nodorum (strain SN15 / ATCC MYA-4574 / FGSC 10173) (Glume blotch fungus) protein is ATP-dependent RNA helicase DBP3 (DBP3).